The sequence spans 265 residues: Undecaprenyl-diphosphatase (265 aa).

A run of 7 helical transmembrane segments spans residues 38 to 58 (RSDF…CLAL), 75 to 95 (RDYV…GLIV), 108 to 128 (PVAW…HVAG), 135 to 155 (VVTW…GVFP), 181 to 201 (FVFM…LLEM), 215 to 235 (VAVA…WLLS), and 244 to 264 (VFAV…PAAA).

Belongs to the UppP family.

Its subcellular location is the cell inner membrane. It catalyses the reaction di-trans,octa-cis-undecaprenyl diphosphate + H2O = di-trans,octa-cis-undecaprenyl phosphate + phosphate + H(+). Its function is as follows. Catalyzes the dephosphorylation of undecaprenyl diphosphate (UPP). Confers resistance to bacitracin. The protein is Undecaprenyl-diphosphatase of Xanthomonas oryzae pv. oryzae (strain MAFF 311018).